A 486-amino-acid chain; its full sequence is Glutamyl-tRNA(Gln) amidotransferase subunit A (486 aa).

Residues Lys78 and Ser153 each act as charge relay system in the active site. Ser177 functions as the Acyl-ester intermediate in the catalytic mechanism.

It belongs to the amidase family. GatA subfamily. In terms of assembly, heterotrimer of A, B and C subunits.

It carries out the reaction L-glutamyl-tRNA(Gln) + L-glutamine + ATP + H2O = L-glutaminyl-tRNA(Gln) + L-glutamate + ADP + phosphate + H(+). In terms of biological role, allows the formation of correctly charged Gln-tRNA(Gln) through the transamidation of misacylated Glu-tRNA(Gln) in organisms which lack glutaminyl-tRNA synthetase. The reaction takes place in the presence of glutamine and ATP through an activated gamma-phospho-Glu-tRNA(Gln). In Desulfosudis oleivorans (strain DSM 6200 / JCM 39069 / Hxd3) (Desulfococcus oleovorans), this protein is Glutamyl-tRNA(Gln) amidotransferase subunit A.